The chain runs to 292 residues: Elongation factor Ts (292 aa).

Positions 79–82 (TDFV) are involved in Mg(2+) ion dislocation from EF-Tu.

This sequence belongs to the EF-Ts family.

The protein resides in the cytoplasm. Functionally, associates with the EF-Tu.GDP complex and induces the exchange of GDP to GTP. It remains bound to the aminoacyl-tRNA.EF-Tu.GTP complex up to the GTP hydrolysis stage on the ribosome. This is Elongation factor Ts from Xanthomonas oryzae pv. oryzae (strain MAFF 311018).